A 483-amino-acid chain; its full sequence is Phloretin 2'-O-glucosyltransferase (483 aa).

The active-site Proton acceptor is His-15. His-15 is a binding site for an anthocyanidin. Asp-118 functions as the Charge relay in the catalytic mechanism. Residues Thr-140, Ala-360, Gln-362, His-377, Trp-380, Asn-381, Ser-382, and Glu-385 each coordinate UDP-alpha-D-glucose. Ala-400 is an an anthocyanidin binding site. UDP-alpha-D-glucose is bound by residues Glu-401 and Gln-402.

Belongs to the UDP-glycosyltransferase family.

The enzyme catalyses phloretin + UDP-alpha-D-glucose = phlorizin + UDP + H(+). Glycosyltransferase that possesses phloretin 2'-O-glycosyltransferase activity. Converts phloretin to phlorizin (phloretin 2'-O-glucoside), a potent antioxidant. Is specific for phloretin and does not possess glycosyltransferase activity toward naringenin, naringenin chalcone, eriodictyol, eriodictyol chalcone, apigenin, luteolin, kaempferol, quercetin, isoliquiritigenin, butein, caffeic acid, 2-coumaric acid, 3-coumaric acid, 3-hydroxybenzoic acid, 3,4-dihydroxybenzoic acid and 3,4-dihydroxyhydrocinnamic acid. Can glycosylate phloretin in the presence of UDP-glucose, UDP-xylose and UDP-galactose. This is Phloretin 2'-O-glucosyltransferase from Pyrus communis (Pear).